The chain runs to 360 residues: Heme A synthase (360 aa).

Helical transmembrane passes span 29–49 (WLFL…ATRL), 111–131 (FLGR…WWTG), 139–159 (LGLV…WIMV), 175–195 (LAAH…LAAG), 210–230 (LTAL…GLVA), 269–289 (VALV…LALL), 309–329 (ALAG…LLAV), and 330–350 (PLWA…MAVA). His-276 contributes to the heme binding site. His-337 is a heme binding site.

Belongs to the COX15/CtaA family. Type 2 subfamily. In terms of assembly, interacts with CtaB. Heme b serves as cofactor.

It is found in the cell membrane. The catalysed reaction is Fe(II)-heme o + 2 A + H2O = Fe(II)-heme a + 2 AH2. It participates in porphyrin-containing compound metabolism; heme A biosynthesis; heme A from heme O: step 1/1. Functionally, catalyzes the conversion of heme O to heme A by two successive hydroxylations of the methyl group at C8. The first hydroxylation forms heme I, the second hydroxylation results in an unstable dihydroxymethyl group, which spontaneously dehydrates, resulting in the formyl group of heme A. This is Heme A synthase from Methylobacterium sp. (strain 4-46).